An 86-amino-acid chain; its full sequence is Large ribosomal subunit protein uL23c (86 aa).

It belongs to the universal ribosomal protein uL23 family. As to quaternary structure, part of the 50S ribosomal subunit.

The protein resides in the plastid. It is found in the chloroplast. Binds to 23S rRNA. This Chlorella vulgaris (Green alga) protein is Large ribosomal subunit protein uL23c (rpl23).